The chain runs to 134 residues: Ribonuclease VapC1 (134 aa).

One can recognise a PINc domain in the interval 4 to 123; sequence IIDTSIIIAL…LNVKDFKRIQ (120 aa). The Mg(2+) site is built by Asp-6 and Asp-97.

Belongs to the PINc/VapC protein family. Mg(2+) is required as a cofactor.

Functionally, toxic component of a type II toxin-antitoxin (TA) system. Has ssRNase activity. Upon expression in E.coli inhibits growth in liquid culture; this toxic effect is neutralized by coexpression with cognate antitoxin VapB1. Its RNase activity is partially inhibited in vitro by VapB1. In Rickettsia felis (strain ATCC VR-1525 / URRWXCal2) (Rickettsia azadi), this protein is Ribonuclease VapC1.